A 338-amino-acid polypeptide reads, in one-letter code: D-xylulose reductase (338 aa).

Residues cysteine 40, histidine 65, and glutamate 151 each coordinate Zn(2+).

This sequence belongs to the zinc-containing alcohol dehydrogenase family. In terms of assembly, homotetramer. It depends on Zn(2+) as a cofactor.

The enzyme catalyses xylitol + NAD(+) = D-xylulose + NADH + H(+). In Morganella morganii (Proteus morganii), this protein is D-xylulose reductase.